A 340-amino-acid polypeptide reads, in one-letter code: UDP-3-O-(3-hydroxymyristoyl)glucosamine N-acyltransferase (340 aa).

Histidine 239 (proton acceptor) is an active-site residue.

The protein belongs to the transferase hexapeptide repeat family. LpxD subfamily. In terms of assembly, homotrimer.

It catalyses the reaction a UDP-3-O-[(3R)-3-hydroxyacyl]-alpha-D-glucosamine + a (3R)-hydroxyacyl-[ACP] = a UDP-2-N,3-O-bis[(3R)-3-hydroxyacyl]-alpha-D-glucosamine + holo-[ACP] + H(+). The catalysed reaction is UDP-3-O-[(3R)-3-hydroxytetradecanoyl]-alpha-D-glucosamine + (3R)-hydroxytetradecanoyl-[ACP] = UDP-2-N,3-O-bis[(3R)-3-hydroxytetradecanoyl]-alpha-D-glucosamine + holo-[ACP] + H(+). It functions in the pathway glycolipid biosynthesis; lipid IV(A) biosynthesis; lipid IV(A) from (3R)-3-hydroxytetradecanoyl-[acyl-carrier-protein] and UDP-N-acetyl-alpha-D-glucosamine: step 3/6. Functionally, catalyzes the N-acylation of UDP-3-O-(hydroxytetradecanoyl)glucosamine using 3-hydroxytetradecanoyl-ACP as the acyl donor. Is involved in the biosynthesis of lipid A, a phosphorylated glycolipid that anchors the lipopolysaccharide to the outer membrane of the cell. The polypeptide is UDP-3-O-(3-hydroxymyristoyl)glucosamine N-acyltransferase (Sodalis glossinidius (strain morsitans)).